The sequence spans 567 residues: Proline--tRNA ligase (567 aa).

This sequence belongs to the class-II aminoacyl-tRNA synthetase family. ProS type 1 subfamily. In terms of assembly, homodimer.

It localises to the cytoplasm. The catalysed reaction is tRNA(Pro) + L-proline + ATP = L-prolyl-tRNA(Pro) + AMP + diphosphate. Its function is as follows. Catalyzes the attachment of proline to tRNA(Pro) in a two-step reaction: proline is first activated by ATP to form Pro-AMP and then transferred to the acceptor end of tRNA(Pro). As ProRS can inadvertently accommodate and process non-cognate amino acids such as alanine and cysteine, to avoid such errors it has two additional distinct editing activities against alanine. One activity is designated as 'pretransfer' editing and involves the tRNA(Pro)-independent hydrolysis of activated Ala-AMP. The other activity is designated 'posttransfer' editing and involves deacylation of mischarged Ala-tRNA(Pro). The misacylated Cys-tRNA(Pro) is not edited by ProRS. This is Proline--tRNA ligase from Streptomyces griseus subsp. griseus (strain JCM 4626 / CBS 651.72 / NBRC 13350 / KCC S-0626 / ISP 5235).